The following is an 803-amino-acid chain: Leucine--tRNA ligase (803 aa).

The 'HIGH' region motif lies at 40 to 51; it reads PYPSGAGLHVGH. A 'KMSKS' region motif is present at residues 575–579; that stretch reads KMSKS. K578 lines the ATP pocket.

The protein belongs to the class-I aminoacyl-tRNA synthetase family.

It localises to the cytoplasm. It carries out the reaction tRNA(Leu) + L-leucine + ATP = L-leucyl-tRNA(Leu) + AMP + diphosphate. This Listeria welshimeri serovar 6b (strain ATCC 35897 / DSM 20650 / CCUG 15529 / CIP 8149 / NCTC 11857 / SLCC 5334 / V8) protein is Leucine--tRNA ligase.